The chain runs to 156 residues: S-ribosylhomocysteine lyase (156 aa).

His54, His58, and Cys126 together coordinate Fe cation.

It belongs to the LuxS family. In terms of assembly, homodimer. Fe cation serves as cofactor.

The catalysed reaction is S-(5-deoxy-D-ribos-5-yl)-L-homocysteine = (S)-4,5-dihydroxypentane-2,3-dione + L-homocysteine. In terms of biological role, involved in the synthesis of autoinducer 2 (AI-2) which is secreted by bacteria and is used to communicate both the cell density and the metabolic potential of the environment. The regulation of gene expression in response to changes in cell density is called quorum sensing. Catalyzes the transformation of S-ribosylhomocysteine (RHC) to homocysteine (HC) and 4,5-dihydroxy-2,3-pentadione (DPD). This chain is S-ribosylhomocysteine lyase, found in Shouchella clausii (strain KSM-K16) (Alkalihalobacillus clausii).